A 591-amino-acid chain; its full sequence is Inactive metallocarboxypeptidase ECM14 (591 aa).

Residues 1–21 (MRLFARLEVLAILACAVPIAA) form the signal peptide. The propeptide occupies 22 to 175 (IPSFLSNSYP…QTIYESYPSS (154 aa)). The region spanning 203–523 (DYQPFSVIVT…NAVMVLGRFL (321 aa)) is the Peptidase M14 domain. Zn(2+)-binding residues include histidine 265 and glutamate 268. Substrate is bound by residues 265–268 (HARE), arginine 323, and 340–341 (DR). A disulfide bond links cysteine 334 and cysteine 357. N-linked (GlcNAc...) asparagine glycans are attached at residues asparagine 350 and asparagine 381. A Zn(2+)-binding site is contributed by histidine 397. 398-399 (SY) lines the substrate pocket. The span at 533-543 (DWEDESQRPKA) shows a compositional bias: basic and acidic residues. A disordered region spans residues 533–591 (DWEDESQRPKADEDDIPSENELGENDDSWIPFDYRNHDDQNEGEGYDNDEWGFRRRRKG). Acidic residues-rich tracts occupy residues 544–559 (DEDDIPSENELGENDD) and 573–582 (NEGEGYDNDE).

The protein belongs to the peptidase M14 family. Requires Zn(2+) as cofactor.

It localises to the vacuole. The protein resides in the secreted. In terms of biological role, inactive carboxypeptidase that may play a role in cell wall organization and biogenesis. The polypeptide is Inactive metallocarboxypeptidase ECM14 (ECM14) (Paracoccidioides lutzii (strain ATCC MYA-826 / Pb01) (Paracoccidioides brasiliensis)).